The chain runs to 397 residues: Enoyl-[acyl-carrier-protein] reductase [NADH] (397 aa).

NAD(+) is bound by residues 48 to 53 (GASTGY), 74 to 75 (FE), 111 to 112 (DA), and 139 to 140 (LA). Y225 is a substrate binding site. Catalysis depends on Y235, which acts as the Proton donor. Residues K244 and 273-275 (VVT) contribute to the NAD(+) site.

Belongs to the TER reductase family. As to quaternary structure, monomer.

The catalysed reaction is a 2,3-saturated acyl-[ACP] + NAD(+) = a (2E)-enoyl-[ACP] + NADH + H(+). It functions in the pathway lipid metabolism; fatty acid biosynthesis. Involved in the final reduction of the elongation cycle of fatty acid synthesis (FAS II). Catalyzes the reduction of a carbon-carbon double bond in an enoyl moiety that is covalently linked to an acyl carrier protein (ACP). The sequence is that of Enoyl-[acyl-carrier-protein] reductase [NADH] from Pseudoalteromonas translucida (strain TAC 125).